The chain runs to 148 residues: SsrA-binding protein (148 aa).

The protein belongs to the SmpB family.

Its subcellular location is the cytoplasm. In terms of biological role, required for rescue of stalled ribosomes mediated by trans-translation. Binds to transfer-messenger RNA (tmRNA), required for stable association of tmRNA with ribosomes. tmRNA and SmpB together mimic tRNA shape, replacing the anticodon stem-loop with SmpB. tmRNA is encoded by the ssrA gene; the 2 termini fold to resemble tRNA(Ala) and it encodes a 'tag peptide', a short internal open reading frame. During trans-translation Ala-aminoacylated tmRNA acts like a tRNA, entering the A-site of stalled ribosomes, displacing the stalled mRNA. The ribosome then switches to translate the ORF on the tmRNA; the nascent peptide is terminated with the 'tag peptide' encoded by the tmRNA and targeted for degradation. The ribosome is freed to recommence translation, which seems to be the essential function of trans-translation. The sequence is that of SsrA-binding protein from Ehrlichia ruminantium (strain Gardel).